A 274-amino-acid polypeptide reads, in one-letter code: Chemotaxis protein methyltransferase 1 (274 aa).

Positions 1 to 274 (MSAANADFEL…CSPGIIYRAK (274 aa)) constitute a CheR-type methyltransferase domain. S-adenosyl-L-methionine contacts are provided by residues asparagine 72, threonine 74, arginine 78, glutamate 115, aspartate 144, 200–201 (NL), and 217–218 (RN).

It catalyses the reaction L-glutamyl-[protein] + S-adenosyl-L-methionine = [protein]-L-glutamate 5-O-methyl ester + S-adenosyl-L-homocysteine. Methylation of the membrane-bound methyl-accepting chemotaxis proteins (MCP) to form gamma-glutamyl methyl ester residues in MCP. The sequence is that of Chemotaxis protein methyltransferase 1 (cheR1) from Pseudomonas aeruginosa (strain ATCC 15692 / DSM 22644 / CIP 104116 / JCM 14847 / LMG 12228 / 1C / PRS 101 / PAO1).